Consider the following 375-residue polypeptide: 4-hydroxy-3-methylbut-2-en-1-yl diphosphate synthase (flavodoxin) (375 aa).

[4Fe-4S] cluster is bound by residues Cys-275, Cys-278, Cys-310, and Glu-317.

The protein belongs to the IspG family. Requires [4Fe-4S] cluster as cofactor.

The enzyme catalyses (2E)-4-hydroxy-3-methylbut-2-enyl diphosphate + oxidized [flavodoxin] + H2O + 2 H(+) = 2-C-methyl-D-erythritol 2,4-cyclic diphosphate + reduced [flavodoxin]. Its pathway is isoprenoid biosynthesis; isopentenyl diphosphate biosynthesis via DXP pathway; isopentenyl diphosphate from 1-deoxy-D-xylulose 5-phosphate: step 5/6. In terms of biological role, converts 2C-methyl-D-erythritol 2,4-cyclodiphosphate (ME-2,4cPP) into 1-hydroxy-2-methyl-2-(E)-butenyl 4-diphosphate. This Ruegeria pomeroyi (strain ATCC 700808 / DSM 15171 / DSS-3) (Silicibacter pomeroyi) protein is 4-hydroxy-3-methylbut-2-en-1-yl diphosphate synthase (flavodoxin).